Consider the following 519-residue polypeptide: Probable cytochrome P450 513D1 (519 aa).

Residues 1–21 (MGISSIIIILFIIVLLKKLIK) traverse the membrane as a helical segment. Cysteine 464 contributes to the heme binding site.

The protein belongs to the cytochrome P450 family. Requires heme as cofactor.

Its subcellular location is the membrane. This chain is Probable cytochrome P450 513D1 (cyp513D1), found in Dictyostelium discoideum (Social amoeba).